Reading from the N-terminus, the 248-residue chain is DNA repair protein RecO (248 aa).

This sequence belongs to the RecO family.

In terms of biological role, involved in DNA repair and RecF pathway recombination. This is DNA repair protein RecO from Bradyrhizobium sp. (strain ORS 278).